Consider the following 165-residue polypeptide: UPF0254 protein MmarC6_1720 (165 aa).

The protein belongs to the UPF0254 family.

This chain is UPF0254 protein MmarC6_1720, found in Methanococcus maripaludis (strain C6 / ATCC BAA-1332).